A 190-amino-acid chain; its full sequence is Potassium-transporting ATPase KdpC subunit (190 aa).

A helical membrane pass occupies residues 10–30; it reads TFIFLLLITGGVYPLLTTVLG.

The protein belongs to the KdpC family. In terms of assembly, the system is composed of three essential subunits: KdpA, KdpB and KdpC.

Its subcellular location is the cell inner membrane. Its function is as follows. Part of the high-affinity ATP-driven potassium transport (or Kdp) system, which catalyzes the hydrolysis of ATP coupled with the electrogenic transport of potassium into the cytoplasm. This subunit acts as a catalytic chaperone that increases the ATP-binding affinity of the ATP-hydrolyzing subunit KdpB by the formation of a transient KdpB/KdpC/ATP ternary complex. This Escherichia coli (strain K12 / MC4100 / BW2952) protein is Potassium-transporting ATPase KdpC subunit.